We begin with the raw amino-acid sequence, 338 residues long: Cytochrome c biogenesis protein CcsA (338 aa).

8 helical membrane-spanning segments follow: residues 11-31 (VLLDNAAFAALMVATALYWLA), 39-59 (LLHELGTGASAVALLSVTGLL), 76-96 (ESLFFLCWCVLAVHIAAEAFA), 100-120 (LVGVFTLPVALGMVAFSSLTL), 145-165 (VMILSYGALMVGSLVSIAFLI), 244-264 (LIGLGFPLITVGIIAGAVWAN), 278-295 (TWSLITWFIFAAYLHARI), and 305-325 (ATLAAVGFVSVWITYLGVNFL).

Belongs to the CcmF/CycK/Ccl1/NrfE/CcsA family. In terms of assembly, may interact with ccs1.

The protein localises to the cell inner membrane. Required during biogenesis of c-type cytochromes (cytochrome c6 and cytochrome f) at the step of heme attachment. The protein is Cytochrome c biogenesis protein CcsA of Gloeobacter violaceus (strain ATCC 29082 / PCC 7421).